Reading from the N-terminus, the 130-residue chain is D-ribose pyranase (130 aa).

Residue His20 is the Proton donor of the active site. Substrate is bound by residues Asp28, His97, and 119–121; that span reads YAN.

It belongs to the RbsD / FucU family. RbsD subfamily. In terms of assembly, homodecamer.

The protein localises to the cytoplasm. The catalysed reaction is beta-D-ribopyranose = beta-D-ribofuranose. Its pathway is carbohydrate metabolism; D-ribose degradation; D-ribose 5-phosphate from beta-D-ribopyranose: step 1/2. Its function is as follows. Catalyzes the interconversion of beta-pyran and beta-furan forms of D-ribose. In Paracidovorax citrulli (strain AAC00-1) (Acidovorax citrulli), this protein is D-ribose pyranase.